A 254-amino-acid chain; its full sequence is Peptide methionine sulfoxide reductase A5 (254 aa).

Positions 1–26 (MARGSAAAAIAGVVWVLLLLVGVASG) are cleaved as a signal peptide.

It belongs to the MsrA Met sulfoxide reductase family.

It catalyses the reaction L-methionyl-[protein] + [thioredoxin]-disulfide + H2O = L-methionyl-(S)-S-oxide-[protein] + [thioredoxin]-dithiol. The catalysed reaction is [thioredoxin]-disulfide + L-methionine + H2O = L-methionine (S)-S-oxide + [thioredoxin]-dithiol. Catalyzes the reduction of methionine sulfoxide (MetSO) to methionine in proteins. Plays a protective role against oxidative stress by restoring activity to proteins that have been inactivated by methionine oxidation. MSRA family specifically reduces the MetSO S-enantiomer. The protein is Peptide methionine sulfoxide reductase A5 (MSRA5) of Oryza sativa subsp. japonica (Rice).